Reading from the N-terminus, the 557-residue chain is MKDPRHDDQREIRAPRGSELNAKSWLTEAPLRMLMNNLDPEVAEHPKSLVVYGGIGRAARDWECFDKIVEVLKRLEDDETLLVQSGKPVGVFKTHADAPRVLIANSNLVPHWANWEHFNELDKKGLMMYGQMTAGSWIYIGSQGIVQGTYETFVSVAKQHFNGEAHGRWILTGGLGGMGGAQPLAATMAGFCMLAVDCDPSRIEFRLRTRYLDKQAKDLDDALAMIENAKKTGEAISIGLLGNAADVYAELVKRGVTPDVVTDQTSAHDPLNGYLPQGWTMEHAAEMRLKDPAAVVKAAKQSMAVQVQAMLALQEAGAATLDYGNNIRQMALEEGVKNAFDFPGFVPAYIRPLFCEGVGPFRWAALSGDPEDIYKTDAKVKELIPDNPHLHNWLDMARERISFQGLPARICWVGLKDRARLGLAFNEMVRNGELKAPVVIGRDHLDSGSVASPNRETESMMDGSDAVSDWPLLNAMLNVAGGATWVSLHHGGGVGMGFSQHSGVVIVCDGSEAADQRIARVLRNDPGTGVMRHADAGYDIARNCAKENGLDLPMLKD.

NAD(+)-binding positions include 53 to 54 (GG), Gln131, 177 to 179 (GMG), Asp197, Arg202, 243 to 244 (NA), 264 to 268 (QTSAH), 274 to 275 (YL), and Tyr323. Cys411 is an active-site residue. Gly493 provides a ligand contact to NAD(+).

It belongs to the urocanase family. It depends on NAD(+) as a cofactor.

The protein resides in the cytoplasm. The enzyme catalyses 4-imidazolone-5-propanoate = trans-urocanate + H2O. It participates in amino-acid degradation; L-histidine degradation into L-glutamate; N-formimidoyl-L-glutamate from L-histidine: step 2/3. Catalyzes the conversion of urocanate to 4-imidazolone-5-propionate. This Hahella chejuensis (strain KCTC 2396) protein is Urocanate hydratase.